The following is a 147-amino-acid chain: Sulfur acceptor protein CsdE (147 aa).

The Cysteine persulfide intermediate role is filled by Cys61. The residue at position 61 (Cys61) is a Cysteine persulfide.

Belongs to the SufE family. As to quaternary structure, homodimer. Forms a heterodimer with CsdA. Interacts with CsdA and with TcdA/CsdL.

Functionally, stimulates the cysteine desulfurase activity of CsdA. Contains a cysteine residue (Cys-61) that acts to accept sulfur liberated via the desulfurase activity of CsdA. May be able to transfer sulfur to TcdA/CsdL. Seems to support the function of TcdA in the generation of cyclic threonylcarbamoyladenosine at position 37 (ct(6)A37) in tRNAs that read codons beginning with adenine. Does not appear to participate in Fe/S biogenesis. The sequence is that of Sulfur acceptor protein CsdE (csdE) from Escherichia coli (strain K12).